A 247-amino-acid chain; its full sequence is MILMRAPIVEVFSSIQGEGLLVGRRQIFVRFAGCNLNCSYCDTPESRDPSAGRLFTAPELTEIIEGLITPDFHSISITGGEPLLYPDFITELLEESPHRTLLETNGSLPSNAERIAHLFDYASVDIKIAEHFSDNLRSGTTESDISSPGDLIDREIQVINILISRGVNTYCKVVVMPTTGAGYIGALAERLLECVDEPERLPLVIQPCSPPEQWAQNTPRLLEMSQEAGKYMDVYVIPQMHRALGLR.

Substrate-binding positions include 15-17 (IQG) and Arg-30. Residues 21 to 247 (LVGRRQIFVR…PQMHRALGLR (227 aa)) form the Radical SAM core domain. Residues Cys-34, Cys-38, and Cys-41 each coordinate [4Fe-4S] cluster. Thr-43 provides a ligand contact to Mg(2+). Thr-78 lines the substrate pocket. Gly-80 is a binding site for S-adenosyl-L-methionine.

Belongs to the radical SAM superfamily. 7-carboxy-7-deazaguanine synthase family. Homodimer. [4Fe-4S] cluster serves as cofactor. The cofactor is S-adenosyl-L-methionine. Mg(2+) is required as a cofactor.

It carries out the reaction 6-carboxy-5,6,7,8-tetrahydropterin + H(+) = 7-carboxy-7-deazaguanine + NH4(+). Its pathway is purine metabolism; 7-cyano-7-deazaguanine biosynthesis. Functionally, catalyzes the complex heterocyclic radical-mediated conversion of 6-carboxy-5,6,7,8-tetrahydropterin (CPH4) to 7-carboxy-7-deazaguanine (CDG), a step common to the biosynthetic pathways of all 7-deazapurine-containing compounds. The sequence is that of 7-carboxy-7-deazaguanine synthase from Methanothermobacter thermautotrophicus (strain ATCC 29096 / DSM 1053 / JCM 10044 / NBRC 100330 / Delta H) (Methanobacterium thermoautotrophicum).